Here is a 599-residue protein sequence, read N- to C-terminus: RING finger protein unkempt (599 aa).

C3H1-type zinc fingers lie at residues 71-100 (YSAD…HRTA), 111-141 (YYKT…HGMQ), 194-220 (NYKT…HNSK), 230-264 (KYRS…HTRT), and 272-300 (IYKS…HVEP). S411 bears the Phosphoserine mark. The RING-type zinc-finger motif lies at 556–591 (CMKCEENNRTVTLEPCNHLSICNTCAESVTECPYCQ).

The protein belongs to the unkempt family. In terms of tissue distribution, ubiquitous in most somatic tissues from syncytial embryo through to embryo stage 15. Expression becomes restricted predominantly to the CNS at stages 16 and 17.

The protein resides in the cytoplasm. Its function is as follows. Essential for late larval/early pupal development. The protein is RING finger protein unkempt (unk) of Drosophila melanogaster (Fruit fly).